The sequence spans 604 residues: Glutamine--fructose-6-phosphate aminotransferase [isomerizing] (604 aa).

Cysteine 2 (nucleophile; for GATase activity) is an active-site residue. The Glutamine amidotransferase type-2 domain maps to 2–218; that stretch reads CGIVGVVGNR…DKELVILTKD (217 aa). 2 SIS domains span residues 284–423 and 456–594; these read IITS…ANGK and VQAL…VDKP. Lysine 599 functions as the For Fru-6P isomerization activity in the catalytic mechanism.

In terms of assembly, homodimer.

It localises to the cytoplasm. The enzyme catalyses D-fructose 6-phosphate + L-glutamine = D-glucosamine 6-phosphate + L-glutamate. Its function is as follows. Catalyzes the first step in hexosamine metabolism, converting fructose-6P into glucosamine-6P using glutamine as a nitrogen source. The sequence is that of Glutamine--fructose-6-phosphate aminotransferase [isomerizing] from Streptococcus pyogenes serotype M1.